Consider the following 64-residue polypeptide: DNA gyrase inhibitor YacG (64 aa).

Zn(2+)-binding residues include Cys-9, Cys-12, Cys-28, and Cys-32. Positions Asp-42–Tyr-64 are disordered. The segment covering Ser-54–Tyr-64 has biased composition (acidic residues).

Belongs to the DNA gyrase inhibitor YacG family. In terms of assembly, interacts with GyrB. It depends on Zn(2+) as a cofactor.

In terms of biological role, inhibits all the catalytic activities of DNA gyrase by preventing its interaction with DNA. Acts by binding directly to the C-terminal domain of GyrB, which probably disrupts DNA binding by the gyrase. This chain is DNA gyrase inhibitor YacG, found in Vibrio vulnificus (strain CMCP6).